Consider the following 134-residue polypeptide: UPF0412 protein YaaI (134 aa).

A signal peptide spans 1–23 (MRSVLTISASLLFGLALSSVAHA).

This sequence belongs to the UPF0412 family.

This chain is UPF0412 protein YaaI, found in Salmonella paratyphi B (strain ATCC BAA-1250 / SPB7).